The following is a 145-amino-acid chain: Ribonuclease HI (145 aa).

Positions Met1–Ala142 constitute an RNase H type-1 domain. Mg(2+) contacts are provided by Asp10, Glu48, Asp70, and Asp134.

This sequence belongs to the RNase H family. As to quaternary structure, monomer. The cofactor is Mg(2+).

The protein resides in the cytoplasm. The catalysed reaction is Endonucleolytic cleavage to 5'-phosphomonoester.. In terms of biological role, endonuclease that specifically degrades the RNA of RNA-DNA hybrids. The chain is Ribonuclease HI from Neisseria meningitidis serogroup B (strain ATCC BAA-335 / MC58).